Consider the following 197-residue polypeptide: Holliday junction branch migration complex subunit RuvA (197 aa).

The segment at 1 to 61 (MYEYFEGTIT…ENGMTLYGFK (61 aa)) is domain I. The domain II stretch occupies residues 62-140 (SQQDKVLFNK…NYVAENLFTE (79 aa)). The interval 141 to 150 (DEPVESVFPA) is flexible linker. Residues 150–197 (ALEDALLALGALGYSQKEVDRIKPKLKKLPEMSADEYIKQGLGFLLKK) are domain III.

The protein belongs to the RuvA family. As to quaternary structure, homotetramer. Forms an RuvA(8)-RuvB(12)-Holliday junction (HJ) complex. HJ DNA is sandwiched between 2 RuvA tetramers; dsDNA enters through RuvA and exits via RuvB. An RuvB hexamer assembles on each DNA strand where it exits the tetramer. Each RuvB hexamer is contacted by two RuvA subunits (via domain III) on 2 adjacent RuvB subunits; this complex drives branch migration. In the full resolvosome a probable DNA-RuvA(4)-RuvB(12)-RuvC(2) complex forms which resolves the HJ.

The protein localises to the cytoplasm. Functionally, the RuvA-RuvB-RuvC complex processes Holliday junction (HJ) DNA during genetic recombination and DNA repair, while the RuvA-RuvB complex plays an important role in the rescue of blocked DNA replication forks via replication fork reversal (RFR). RuvA specifically binds to HJ cruciform DNA, conferring on it an open structure. The RuvB hexamer acts as an ATP-dependent pump, pulling dsDNA into and through the RuvAB complex. HJ branch migration allows RuvC to scan DNA until it finds its consensus sequence, where it cleaves and resolves the cruciform DNA. This chain is Holliday junction branch migration complex subunit RuvA, found in Lactobacillus delbrueckii subsp. bulgaricus (strain ATCC BAA-365 / Lb-18).